The following is a 248-amino-acid chain: 1-(5-phosphoribosyl)-5-[(5-phosphoribosylamino)methylideneamino] imidazole-4-carboxamide isomerase (248 aa).

Asp-8 (proton acceptor) is an active-site residue. The active-site Proton donor is Asp-129.

Belongs to the HisA/HisF family.

The protein localises to the cytoplasm. The enzyme catalyses 1-(5-phospho-beta-D-ribosyl)-5-[(5-phospho-beta-D-ribosylamino)methylideneamino]imidazole-4-carboxamide = 5-[(5-phospho-1-deoxy-D-ribulos-1-ylimino)methylamino]-1-(5-phospho-beta-D-ribosyl)imidazole-4-carboxamide. The protein operates within amino-acid biosynthesis; L-histidine biosynthesis; L-histidine from 5-phospho-alpha-D-ribose 1-diphosphate: step 4/9. The chain is 1-(5-phosphoribosyl)-5-[(5-phosphoribosylamino)methylideneamino] imidazole-4-carboxamide isomerase from Sinorhizobium medicae (strain WSM419) (Ensifer medicae).